A 92-amino-acid polypeptide reads, in one-letter code: Small ribosomal subunit protein uS19 (92 aa).

The protein belongs to the universal ribosomal protein uS19 family.

In terms of biological role, protein S19 forms a complex with S13 that binds strongly to the 16S ribosomal RNA. The protein is Small ribosomal subunit protein uS19 of Novosphingobium aromaticivorans (strain ATCC 700278 / DSM 12444 / CCUG 56034 / CIP 105152 / NBRC 16084 / F199).